The sequence spans 85 residues: Putative membrane protein insertion efficiency factor (85 aa).

Belongs to the UPF0161 family.

The protein localises to the cell inner membrane. Its function is as follows. Could be involved in insertion of integral membrane proteins into the membrane. The chain is Putative membrane protein insertion efficiency factor from Shewanella woodyi (strain ATCC 51908 / MS32).